Here is a 160-residue protein sequence, read N- to C-terminus: Transcriptional repressor NrdR (160 aa).

Polar residues predominate over residues 1 to 11 (MRCPNCNSLDT). The interval 1-20 (MRCPNCNSLDTQVKDSRPTE) is disordered. Residues 3–34 (CPNCNSLDTQVKDSRPTEDSSVIRRRRVCIAC) fold into a zinc finger. One can recognise an ATP-cone domain in the interval 49 to 139 (LIVIKRNGRR…VYRNFREAKD (91 aa)).

The protein belongs to the NrdR family. Zn(2+) is required as a cofactor.

In terms of biological role, negatively regulates transcription of bacterial ribonucleotide reductase nrd genes and operons by binding to NrdR-boxes. This Rhodopseudomonas palustris (strain ATCC BAA-98 / CGA009) protein is Transcriptional repressor NrdR.